A 407-amino-acid chain; its full sequence is Tryptophan synthase beta chain (407 aa).

Lys91 carries the post-translational modification N6-(pyridoxal phosphate)lysine.

It belongs to the TrpB family. Tetramer of two alpha and two beta chains. Requires pyridoxal 5'-phosphate as cofactor.

The enzyme catalyses (1S,2R)-1-C-(indol-3-yl)glycerol 3-phosphate + L-serine = D-glyceraldehyde 3-phosphate + L-tryptophan + H2O. It functions in the pathway amino-acid biosynthesis; L-tryptophan biosynthesis; L-tryptophan from chorismate: step 5/5. Its function is as follows. The beta subunit is responsible for the synthesis of L-tryptophan from indole and L-serine. The polypeptide is Tryptophan synthase beta chain (Streptococcus pneumoniae (strain Hungary19A-6)).